The following is a 393-amino-acid chain: Proteasome-activating nucleotidase (393 aa).

The stretch at 14–53 forms a coiled coil; sequence SDEVQLVRLLEEKIKSLQIEIENLRKELNYYKAEMEKMLS. ATP is bound by residues 178-183 and Tyr317; that span reads GTGKTM. The segment at 391-393 is docks into pockets in the proteasome alpha-ring to cause gate opening; that stretch reads KYS.

It belongs to the AAA ATPase family. In terms of assembly, homohexamer. The hexameric complex has a two-ring architecture resembling a top hat that caps the 20S proteasome core at one or both ends. Upon ATP-binding, the C-terminus of PAN interacts with the alpha-rings of the proteasome core by binding to the intersubunit pockets.

The protein localises to the cytoplasm. ATPase which is responsible for recognizing, binding, unfolding and translocation of substrate proteins into the archaeal 20S proteasome core particle. Is essential for opening the gate of the 20S proteasome via an interaction with its C-terminus, thereby allowing substrate entry and access to the site of proteolysis. Thus, the C-termini of the proteasomal ATPase function like a 'key in a lock' to induce gate opening and therefore regulate proteolysis. Unfolding activity requires energy from ATP hydrolysis, whereas ATP binding alone promotes ATPase-20S proteasome association which triggers gate opening, and supports translocation of unfolded substrates. In Saccharolobus islandicus (strain M.16.27) (Sulfolobus islandicus), this protein is Proteasome-activating nucleotidase.